The primary structure comprises 1124 residues: Regulator of nonsense transcripts 1 (1124 aa).

The interval 1–410 is sufficient for interaction with RENT2; the sequence is MSVEAYGPSS…LRSSVGAPVE (410 aa). Phosphoserine is present on residues S10 and S31. The segment at 39-69 is disordered; it reads TLPSQTQTPPGGPGGAGGPGGAGAGGAAGQL. Positions 51–66 are enriched in gly residues; the sequence is PGGAGGPGGAGAGGAA. The region spanning 110–267 is the Upf1 CH-rich domain; sequence TKDLPVHACS…NKLEELWKEN (158 aa). 12 residues coordinate Zn(2+): C118, C121, C132, S135, C140, H150, H154, C160, C178, C181, C204, and C208. The interval 118–150 is C3H; that stretch reads CSYCGIHDPACVVYCNTSKKWFCNGRGNTSGSH. The interval 132 to 160 is CC/SHH/C; that stretch reads CNTSKKWFCNGRGNTSGSHIVNHLVRAKC. Residues 178–208 form a C4 region; that stretch reads CYNCGCRNVFLLGFIPAKADSVVVLLCRQPC. ATP is bound by residues Q481 and 501–505; that span reads GTGKT. S560 is modified (phosphoserine). Residues Q671, Y708, and E839 each coordinate ATP. S951 carries the post-translational modification Phosphoserine. Disordered regions lie at residues 1004-1053 and 1066-1091; these read FGQA…VASQ and SMSQ…YLGD. The residue at position 1014 (R1014) is an Omega-N-methylarginine. Positions 1020–1029 are enriched in basic residues; it reads KTGRGGRQKN. Polar residues predominate over residues 1036–1053; the sequence is PSQTTLPNSQASQDVASQ. Residues 1066–1081 are compositionally biased toward low complexity; it reads SMSQPSQMSQPGLSQP. Phosphoserine occurs at positions 1084, 1102, 1105, and 1122. 2 short sequence motifs ([ST]-Q motif) span residues 1084–1085 and 1102–1103; these read SQ. The segment at 1105–1124 is disordered; the sequence is STYQGERAYQHGGVTGLSQY.

It belongs to the DNA2/NAM7 helicase family. Found in a post-splicing messenger ribonucleoprotein (mRNP) complex. Associates with the exon junction complex (EJC). Associates with the SGM1C complex; is phosphorylated by the complex kinase component SGM1. Part of a complex composed of SMG1, DHX34 and UPF1; within the complex DHX34 acts as a scaffolding protein to facilitate SMG1 phosphorylation of UPF1. Interacts with UPF2. Interacts with UPF3A and UPF3B. Interacts with EST1A. Interacts with SLBP. Interacts (when hyperphosphorylated) with PNRC2. Interacts with AGO1 and AGO2. Interacts with GSPT2. Interacts with isoform 1 and isoform 5 of ADAR/ADAR1. Interacts with SMG7. Interacts with ZC3H12A; this interaction occurs in a mRNA translationally active- and termination-dependent manner and is essential for ZC3H12A-mediated degradation of target mRNAs. Interacts with CPSF6. Interacts with MOV10; the interaction is direct and RNA-dependent. Interacts with SHFL; the interaction increases in the presence of RNA. Interacts with UPF2 and DDX4; interactions are mediated by TDRD6. Interacts with DHX34 and PABPC1/PABP1; the interactions are RNA-independent. Interacts with RBM46. In terms of processing, phosphorylated by SMG1; required for formation of mRNA surveillance complexes. As to expression, localizes in male germ cells.

The protein resides in the cytoplasm. It is found in the P-body. Its subcellular location is the nucleus. The protein localises to the perinuclear region. It catalyses the reaction ATP + H2O = ADP + phosphate + H(+). In terms of biological role, RNA-dependent helicase required for nonsense-mediated decay (NMD) of aberrant mRNAs containing premature stop codons and modulates the expression level of normal mRNAs. Is recruited to mRNAs upon translation termination and undergoes a cycle of phosphorylation and dephosphorylation; its phosphorylation appears to be a key step in NMD. Recruited by release factors to stalled ribosomes together with the SMG1C protein kinase complex to form the transient SURF (SMG1-UPF1-eRF1-eRF3) complex. In EJC-dependent NMD, the SURF complex associates with the exon junction complex (EJC) (located 50-55 or more nucleotides downstream from the termination codon) through UPF2 and allows the formation of an UPF1-UPF2-UPF3 surveillance complex which is believed to activate NMD. Phosphorylated UPF1 is recognized by EST1B/SMG5, SMG6 and SMG7 which are thought to provide a link to the mRNA degradation machinery involving exonucleolytic and endonucleolytic pathways, and to serve as adapters to protein phosphatase 2A (PP2A), thereby triggering UPF1 dephosphorylation and allowing the recycling of NMD factors. UPF1 can also activate NMD without UPF2 or UPF3, and in the absence of the NMD-enhancing downstream EJC indicative for alternative NMD pathways. Plays a role in replication-dependent histone mRNA degradation at the end of phase S; the function is independent of UPF2. For the recognition of premature termination codons (PTC) and initiation of NMD a competitive interaction between UPF1 and PABPC1 with the ribosome-bound release factors is proposed. The ATPase activity of UPF1 is required for disassembly of mRNPs undergoing NMD. Together with UPF2 and dependent on TDRD6, mediates the degradation of mRNA harboring long 3'UTR by inducing the NMD machinery. Also capable of unwinding double-stranded DNA and translocating on single-stranded DNA. The sequence is that of Regulator of nonsense transcripts 1 from Mus musculus (Mouse).